Consider the following 155-residue polypeptide: FUN14 domain-containing protein 1 (155 aa).

The Cytoplasmic portion of the chain corresponds to 1 to 47; sequence MATRNPPPQEYESDDDSYEVLDLTEYARRHHWWNRVFGHSSGPMVEK. Residues Ser13 and Ser17 each carry the phosphoserine modification. Tyr18 carries the post-translational modification Phosphotyrosine; by SRC. Residues 18-21 carry the YXXL motif; sequence YEVL. The chain crosses the membrane as a helical span at residues 48-68; the sequence is YSVATQIVMGGVSGWCAGFLF. Residues 69–74 are Mitochondrial intermembrane-facing; it reads QKVGKL. The helical transmembrane segment at 75–95 threads the bilayer; the sequence is AATAVGGGFLLLQIASHSGYV. Residues 96–133 are Cytoplasmic-facing; that stretch reads QIDWKRVEKDVNKAKRQIKKRANKAAPEINNIIEEATE. A Glycyl lysine isopeptide (Lys-Gly) (interchain with G-Cter in ubiquitin) cross-link involves residue Lys119. Residues 134-154 traverse the membrane as a helical segment; sequence FVKQNIVISSGFVGGFLLGLA. Position 155 (Ser155) is a topological domain, mitochondrial intermembrane.

This sequence belongs to the FUN14 family. As to quaternary structure, interacts (via YXXL motif) with MAP1 LC3 family proteins MAP1LC3A, MAP1LC3B and GABARAP. Interacts with DNM1L/DPR1. Interacts with GPX4. In terms of processing, phosphorylation at Ser-13 by CK2 and at Tyr-18 by SRC inhibits activation of mitophagy. Following hypoxia, dephosphorylated at Tyr-18, leading to interaction with MAP1 LC3 family proteins and triggering mitophagy. Dephosphorylation is mediated by PGAM5. Phosphorylated by ULK1 at Ser-17 which enhances FUNDC1 binding to LC3. Ubiquitinated on Lys-119. Deubiquitinated by USP19; leading to hypoxia-induced DRP1 oligomerization and GTPase activity.

The protein localises to the mitochondrion outer membrane. Integral mitochondrial outer-membrane protein that mediates the formation of mitochondria-associated endoplasmic reticulum membranes (MAMs). In turn, mediates angiogenesis and neoangiogenesis through interference with intracellular Ca(2+) communication and regulation of the vascular endothelial growth factor receptor KDR/VEGFR2 expression at both mRNA and protein levels. Also acts as an activator of hypoxia-induced mitophagy, an important mechanism for mitochondrial quality and homeostasis, by interacting with and recruiting LC3 protein family to mitochondria. Mechanistically, recruits DRP1 at ER-mitochondria contact sites leading to DRP1 oligomerization and GTPase activity to facilitate mitochondrial fission during hypoxia. Additionally, plays a role in hepatic ferroptosis by interacting directly with glutathione peroxidase/GPX4 to facilitate its recruitment into mitochondria through TOM/TIM complex where it is degraded by mitophagy. The polypeptide is FUN14 domain-containing protein 1 (FUNDC1) (Bos taurus (Bovine)).